We begin with the raw amino-acid sequence, 340 residues long: UDP-3-O-acylglucosamine N-acyltransferase (340 aa).

His247 (proton acceptor) is an active-site residue.

The protein belongs to the transferase hexapeptide repeat family. LpxD subfamily. As to quaternary structure, homotrimer.

It catalyses the reaction a UDP-3-O-[(3R)-3-hydroxyacyl]-alpha-D-glucosamine + a (3R)-hydroxyacyl-[ACP] = a UDP-2-N,3-O-bis[(3R)-3-hydroxyacyl]-alpha-D-glucosamine + holo-[ACP] + H(+). It participates in bacterial outer membrane biogenesis; LPS lipid A biosynthesis. Functionally, catalyzes the N-acylation of UDP-3-O-acylglucosamine using 3-hydroxyacyl-ACP as the acyl donor. Is involved in the biosynthesis of lipid A, a phosphorylated glycolipid that anchors the lipopolysaccharide to the outer membrane of the cell. The protein is UDP-3-O-acylglucosamine N-acyltransferase of Caulobacter sp. (strain K31).